The following is a 652-amino-acid chain: Gametogenetin (652 aa).

Disordered regions lie at residues 1–39 (MGNL…MTSQ), 52–237 (PGSA…DSES), 251–273 (PSLA…GGGG), 291–473 (QGPL…GHKE), and 488–576 (LAAD…GAAN). Composition is skewed to basic and acidic residues over residues 18–30 (QPSD…RRTS) and 124–133 (RLLEASHRGQ). Residues 123-486 (RRLLEASHRG…APTAAPALPP (364 aa)) form an interaction with GGNBP1 region. Pro residues-rich tracts occupy residues 138–149 (SLRPLKPPPPPR) and 163–178 (QFPP…PPLP). Positions 201 to 212 (ESQAGPRNQGQT) are enriched in polar residues. 3 stretches are compositionally biased toward low complexity: residues 213 to 230 (AGRA…GEMA), 251 to 267 (PSLA…AKAS), and 299 to 312 (ARPL…AQEA). At S389 the chain carries Phosphoserine. Low complexity predominate over residues 407–422 (APALLAPPTFIFPAPT). Pro residues-rich tracts occupy residues 428–466 (RPGP…PPLT) and 495–513 (APSP…PVSA). The interactions with ZNF403/GGNBP2 and OAZ3 stretch occupies residues 491–652 (DQAPAPSPAP…HYDLQATHSN (162 aa)). Basic residues predominate over residues 523-532 (TRTRRNKGSR). A compositionally biased stretch (basic and acidic residues) spans 538–552 (TRKDGLHGDGPRERA).

In terms of assembly, interacts with FANCL, GGNBP1 and ZNF403/GGNBP2.

In terms of biological role, may be involved in spermatogenesis. This is Gametogenetin (GGN) from Homo sapiens (Human).